The following is a 271-amino-acid chain: Multivesicular body subunit 12A (271 aa).

Positions 7-149 constitute an MABP domain; that stretch reads SAPLAGLVWS…GFAIWCKKSK (143 aa). A Phosphothreonine modification is found at Thr-128. Residues 149 to 192 are disordered; sequence KAPRPVPKPRTLSQDMRGLSLDPPKEPSKGSHPERTLSRLGSRA. The short motif at 153-158 is the SH3-binding element; that stretch reads PVPKPR. Phosphoserine is present on residues Ser-161 and Ser-168. Residues 171 to 185 show a composition bias toward basic and acidic residues; the sequence is PPKEPSKGSHPERTL. The interval 190-271 is interaction with TSG101, VPS37B and VPS28; it reads SRASTLRRTD…AAARLPPSVS (82 aa). Phosphoserine occurs at positions 193 and 200. Residue Tyr-202 is modified to Phosphotyrosine. Ser-205 bears the Phosphoserine mark. A UMA domain is found at 213 to 263; it reads MDGVPFTLHPRFEGKSCGPLNLSAFGDLTIKSLADIEKEYNYGFVVEKTAA.

The protein belongs to the MVB12 family. Component of the ESCRT-I complex (endosomal sorting complex required for transport I) which consists of TSG101, VPS28, a VPS37 protein (VPS37A to -D) and MVB12A or MVB12B in a 1:1:1:1 stoichiometry. Interacts with CD2AP and CIN85/SH3KBP1. Interacts with CD2AP (via one of the SH3 domains). Interacts with TSG101; the association appears to be mediated by the TSG101-VPS37 binary subcomplex. Interacts with VPS28. Interacts with VPS37B; the association appears to be mediated by the TSG101-VPS37 binary subcomplex. Interacts with VPS37C; the association appears to be mediated by the TSG101-VPS37 binary subcomplex. Interacts with VPS37D; the association appears to be mediated by the TSG101-VPS37 binary subcomplex. Interacts with CEP55. Post-translationally, phosphorylated on Tyr-202 upon EGF stimulation. Phosphorylation is required for interaction with CD2AP and CIN85/SH3KBP1.

Its subcellular location is the cytoplasm. It localises to the cytoskeleton. The protein resides in the nucleus. It is found in the endosome. The protein localises to the microtubule organizing center. Its subcellular location is the centrosome. It localises to the late endosome membrane. Its function is as follows. Component of the ESCRT-I complex, a regulator of vesicular trafficking process. Required for the sorting of endocytic ubiquitinated cargos into multivesicular bodies. May be involved in the ligand-mediated internalization and down-regulation of EGF receptor. The chain is Multivesicular body subunit 12A (Mvb12a) from Mus musculus (Mouse).